The following is a 564-amino-acid chain: Pestheic acid cluster transcriptional regulator 3 (564 aa).

The zn(2)-C6 fungal-type DNA-binding region spans 11 to 38 (CWTCRLRRKKCDEGKPECTTCQALSITC). Residues 71-123 (RTSSRYRVPPGQKANPKLAPKVHAAASTPSTNTSHSTETTPPSDNGFYDTAES) are disordered. The segment covering 97–113 (STPSTNTSHSTETTPPS) has biased composition (polar residues).

It localises to the nucleus. Functionally, transcription factor that, with ptaR1 and ptaR2, coregulates the expression of the gene cluster that mediates the biosynthesis of pestheic acid, a diphenyl ether which is a biosynthetic precursor of the unique chloropupukeananes. This Pestalotiopsis fici (strain W106-1 / CGMCC3.15140) protein is Pestheic acid cluster transcriptional regulator 3.